The chain runs to 326 residues: N-acetyl-gamma-glutamyl-phosphate reductase (326 aa).

C155 is an active-site residue.

This sequence belongs to the NAGSA dehydrogenase family. Type 1 subfamily.

It localises to the cytoplasm. It carries out the reaction N-acetyl-L-glutamate 5-semialdehyde + phosphate + NADP(+) = N-acetyl-L-glutamyl 5-phosphate + NADPH + H(+). The protein operates within amino-acid biosynthesis; L-arginine biosynthesis; N(2)-acetyl-L-ornithine from L-glutamate: step 3/4. Its function is as follows. Catalyzes the NADPH-dependent reduction of N-acetyl-5-glutamyl phosphate to yield N-acetyl-L-glutamate 5-semialdehyde. The protein is N-acetyl-gamma-glutamyl-phosphate reductase of Shewanella oneidensis (strain ATCC 700550 / JCM 31522 / CIP 106686 / LMG 19005 / NCIMB 14063 / MR-1).